Reading from the N-terminus, the 291-residue chain is Nucleoid occlusion protein (291 aa).

The segment at residues 155–174 (EALAQRLGKGQSTVANKLRL) is a DNA-binding region (H-T-H motif).

Belongs to the ParB family.

It is found in the cytoplasm. The protein localises to the nucleoid. Its function is as follows. Effects nucleoid occlusion by binding relatively nonspecifically to DNA and preventing the assembly of the division machinery in the vicinity of the nucleoid, especially under conditions that disturb the cell cycle. It helps to coordinate cell division and chromosome segregation by preventing the formation of the Z ring through the nucleoid, which would cause chromosome breakage. This chain is Nucleoid occlusion protein, found in Bacillus pumilus (strain SAFR-032).